We begin with the raw amino-acid sequence, 311 residues long: DNA-directed RNA polymerase subunit alpha (311 aa).

The segment at 1-226 is alpha N-terminal domain (alpha-NTD); that stretch reads MIEFEKPNIT…EHLDLFTNLT (226 aa). The tract at residues 243–311 is alpha C-terminal domain (alpha-CTD); sequence DDRILDRTIE…IDLGLGLKDK (69 aa).

Belongs to the RNA polymerase alpha chain family. As to quaternary structure, homodimer. The RNAP catalytic core consists of 2 alpha, 1 beta, 1 beta' and 1 omega subunit. When a sigma factor is associated with the core the holoenzyme is formed, which can initiate transcription.

The enzyme catalyses RNA(n) + a ribonucleoside 5'-triphosphate = RNA(n+1) + diphosphate. Its function is as follows. DNA-dependent RNA polymerase catalyzes the transcription of DNA into RNA using the four ribonucleoside triphosphates as substrates. The sequence is that of DNA-directed RNA polymerase subunit alpha from Streptococcus pneumoniae serotype 4 (strain ATCC BAA-334 / TIGR4).